The chain runs to 2194 residues: Nucleosome-remodeling factor subunit NURF301-like (2194 aa).

The segment covering 1–12 (MAPPRGRSKRKH) has biased composition (basic residues). Residues 1–137 (MAPPRGRSKR…EEEESSDDEF (137 aa)) are disordered. Residues 60–79 (AQRETPSDAEEVEVKIEEIS) are compositionally biased toward basic and acidic residues. Polar residues predominate over residues 80 to 93 (VRSTPASTPAPKST). Over residues 94-112 (SKARGRPKKNPTPPRRKSL) the composition is skewed to basic residues. Positions 118-137 (DIIYMDEDSEEEEESSDDEF) are enriched in acidic residues. DDT domains follow at residues 196–256 (TASI…SDDE) and 341–396 (VGKF…SAVR). Residues 347–392 (DENCRVCGKSSGRVVGCTQCEAAFHVECSHLKPFPEVLVCNICKKN) form a PHD-type 1 zinc finger. Disordered regions lie at residues 1091 to 1122 (ESWL…SLDN), 1158 to 1255 (AKRK…PQPN), 1413 to 1433 (TSNF…PVYS), 1657 to 1701 (MRQE…SNDS), and 1834 to 1888 (ESIA…HTPG). Residues 1151–1187 (RAEAEKTAKRKLEATRKAQKAKEDEERRRIQQQQQRS) adopt a coiled-coil conformation. A compositionally biased stretch (basic and acidic residues) spans 1158–1179 (AKRKLEATRKAQKAKEDEERRR). Positions 1665–1684 (TSGYDSSGNPIRSITSSGDT) are enriched in polar residues. Basic and acidic residues predominate over residues 1852–1861 (KSEDDRDKPE). 2 consecutive DDT domains span residues 1883–1953 (AFHT…EQER) and 1948–2014 (IEEQ…AEGY). 2 PHD-type zinc fingers span residues 1899 to 1950 (IEHC…CIEE) and 1959 to 2010 (ALYC…CTRE). Positions 2030–2134 (QLTRADYTHV…EVFDKKLIDV (105 aa)) constitute a Bromo domain.

It belongs to the BPTF family. In terms of assembly, part of a nucleosome remodeling factor-like (NURF-like) complex containing nurf-1 and isw-1.

It is found in the nucleus. Its function is as follows. Histone-binding component of a NURF-like (nucleosome remodeling factor-like) complex, which would catalyze ATP-dependent nucleosome sliding and facilitate transcription of chromatin. Involved in vulval cell fates. This Caenorhabditis elegans protein is Nucleosome-remodeling factor subunit NURF301-like (nurf-1).